The sequence spans 23 residues: Cytochrome c oxidase subunit 7A-liver, mitochondrial (23 aa).

Belongs to the cytochrome c oxidase VIIa family. In terms of assembly, component of the cytochrome c oxidase (complex IV, CIV), a multisubunit enzyme composed of 14 subunits. The complex is composed of a catalytic core of 3 subunits MT-CO1, MT-CO2 and MT-CO3, encoded in the mitochondrial DNA, and 11 supernumerary subunits COX4I, COX5A, COX5B, COX6A, COX6B, COX6C, COX7A, COX7B, COX7C, COX8 and NDUFA4, which are encoded in the nuclear genome. The complex exists as a monomer or a dimer and forms supercomplexes (SCs) in the inner mitochondrial membrane with NADH-ubiquinone oxidoreductase (complex I, CI) and ubiquinol-cytochrome c oxidoreductase (cytochrome b-c1 complex, complex III, CIII), resulting in different assemblies (supercomplex SCI(1)III(2)IV(1) and megacomplex MCI(2)III(2)IV(2)).

It localises to the mitochondrion inner membrane. The protein operates within energy metabolism; oxidative phosphorylation. Its function is as follows. Component of the cytochrome c oxidase, the last enzyme in the mitochondrial electron transport chain which drives oxidative phosphorylation. The respiratory chain contains 3 multisubunit complexes succinate dehydrogenase (complex II, CII), ubiquinol-cytochrome c oxidoreductase (cytochrome b-c1 complex, complex III, CIII) and cytochrome c oxidase (complex IV, CIV), that cooperate to transfer electrons derived from NADH and succinate to molecular oxygen, creating an electrochemical gradient over the inner membrane that drives transmembrane transport and the ATP synthase. Cytochrome c oxidase is the component of the respiratory chain that catalyzes the reduction of oxygen to water. Electrons originating from reduced cytochrome c in the intermembrane space (IMS) are transferred via the dinuclear copper A center (CU(A)) of subunit 2 and heme A of subunit 1 to the active site in subunit 1, a binuclear center (BNC) formed by heme A3 and copper B (CU(B)). The BNC reduces molecular oxygen to 2 water molecules using 4 electrons from cytochrome c in the IMS and 4 protons from the mitochondrial matrix. The polypeptide is Cytochrome c oxidase subunit 7A-liver, mitochondrial (Oncorhynchus mykiss (Rainbow trout)).